The following is a 562-amino-acid chain: MDYKTQFAESLSNIFTNELTQQQILDLIETPKQDEFGDAAFPCFSLAKQYKKSPAIIAKEVAEKLSDPFFTKVEAVGPYVNVFFNRDTVSDAVLKTILAEKEEYGKNYFGCEKTVVIDYSSPNIAKPFSMGHLRSTMIGNSLKHIAEKCGYEVVGINYIGDWGTQFGKLITAYKKWGNEAVVKEDPIRELFKLYVQFHEEVKDDEELEEEGRAWFKKLEEGDEEAVELWNWFRHESLKEFSRIYELLGVEFTNFQGEAFYNNLMEDFIGILEEHDLLEESEGALVVNLEEEGMPPCLIRKSDGATIYATRDLTAALYRQNTFGFDKALYVVGPEQSLHFNQFFTVLKKLGYTWVDGMEHVPFGFILKDGKKMSTRKGRVILLEEVLEEAIELAKQNIEEKNPNLKQKEEVAKQVGAGAVIFHDLKNERMHNIEFSLENMLKFEGETGPYVQYTHARACSILRKESVEFETCTFALKDDHSWSVVKLLNKFPQVIEIAFNKNEPSVISKYVLDVAQSFNKYYGNVRILEESEEKDSRLALVYAVTVVLKEGLRLLGVEAPEEM.

The 'HIGH' region signature appears at 122–132 (PNIAKPFSMGH).

It belongs to the class-I aminoacyl-tRNA synthetase family. Monomer.

The protein localises to the cytoplasm. It catalyses the reaction tRNA(Arg) + L-arginine + ATP = L-arginyl-tRNA(Arg) + AMP + diphosphate. The polypeptide is Arginine--tRNA ligase 2 (argS2) (Bacillus anthracis).